Reading from the N-terminus, the 117-residue chain is UPF0295 protein GTNG_0491 (117 aa).

2 consecutive transmembrane segments (helical) span residues 12-32 (IRTF…LGLF) and 42-62 (LFMV…FWIG).

This sequence belongs to the UPF0295 family.

Its subcellular location is the cell membrane. In Geobacillus thermodenitrificans (strain NG80-2), this protein is UPF0295 protein GTNG_0491.